Here is a 286-residue protein sequence, read N- to C-terminus: UDP-3-O-acyl-N-acetylglucosamine deacetylase (286 aa).

Zn(2+)-binding residues include H79, H237, and D241. The active-site Proton donor is the H264.

This sequence belongs to the LpxC family. Zn(2+) is required as a cofactor.

It catalyses the reaction a UDP-3-O-[(3R)-3-hydroxyacyl]-N-acetyl-alpha-D-glucosamine + H2O = a UDP-3-O-[(3R)-3-hydroxyacyl]-alpha-D-glucosamine + acetate. It functions in the pathway glycolipid biosynthesis; lipid IV(A) biosynthesis; lipid IV(A) from (3R)-3-hydroxytetradecanoyl-[acyl-carrier-protein] and UDP-N-acetyl-alpha-D-glucosamine: step 2/6. Functionally, catalyzes the hydrolysis of UDP-3-O-myristoyl-N-acetylglucosamine to form UDP-3-O-myristoylglucosamine and acetate, the committed step in lipid A biosynthesis. This Chlamydia muridarum (strain MoPn / Nigg) protein is UDP-3-O-acyl-N-acetylglucosamine deacetylase.